Here is a 113-residue protein sequence, read N- to C-terminus: Large ribosomal subunit protein bL19 (113 aa).

Belongs to the bacterial ribosomal protein bL19 family.

This protein is located at the 30S-50S ribosomal subunit interface and may play a role in the structure and function of the aminoacyl-tRNA binding site. This chain is Large ribosomal subunit protein bL19, found in Desulfitobacterium hafniense (strain DSM 10664 / DCB-2).